Reading from the N-terminus, the 257-residue chain is Imidazole glycerol phosphate synthase subunit HisF (257 aa).

Catalysis depends on residues Asp-11 and Asp-130.

Belongs to the HisA/HisF family. As to quaternary structure, heterodimer of HisH and HisF.

It is found in the cytoplasm. The enzyme catalyses 5-[(5-phospho-1-deoxy-D-ribulos-1-ylimino)methylamino]-1-(5-phospho-beta-D-ribosyl)imidazole-4-carboxamide + L-glutamine = D-erythro-1-(imidazol-4-yl)glycerol 3-phosphate + 5-amino-1-(5-phospho-beta-D-ribosyl)imidazole-4-carboxamide + L-glutamate + H(+). It functions in the pathway amino-acid biosynthesis; L-histidine biosynthesis; L-histidine from 5-phospho-alpha-D-ribose 1-diphosphate: step 5/9. In terms of biological role, IGPS catalyzes the conversion of PRFAR and glutamine to IGP, AICAR and glutamate. The HisF subunit catalyzes the cyclization activity that produces IGP and AICAR from PRFAR using the ammonia provided by the HisH subunit. This Proteus mirabilis (strain HI4320) protein is Imidazole glycerol phosphate synthase subunit HisF.